A 125-amino-acid chain; its full sequence is Large ribosomal subunit protein uL22 (125 aa).

Belongs to the universal ribosomal protein uL22 family. In terms of assembly, part of the 50S ribosomal subunit.

This protein binds specifically to 23S rRNA; its binding is stimulated by other ribosomal proteins, e.g. L4, L17, and L20. It is important during the early stages of 50S assembly. It makes multiple contacts with different domains of the 23S rRNA in the assembled 50S subunit and ribosome. Functionally, the globular domain of the protein is located near the polypeptide exit tunnel on the outside of the subunit, while an extended beta-hairpin is found that lines the wall of the exit tunnel in the center of the 70S ribosome. The chain is Large ribosomal subunit protein uL22 from Thermobifida fusca (strain YX).